The sequence spans 356 residues: Thymidine kinase (356 aa).

Positions 1-29 are disordered; sequence MMDSRATYVPPKKISESNSNAEEDPTDCS. Position 61-68 (61-68) interacts with ATP; the sequence is GCVGVGKT. Glutamate 86 functions as the Proton acceptor in the catalytic mechanism. Position 122 (glutamine 122) interacts with substrate. Residue arginine 208 coordinates ATP. Arginine 214 serves as a coordination point for substrate.

It belongs to the herpesviridae thymidine kinase family. Homodimer.

The enzyme catalyses thymidine + ATP = dTMP + ADP + H(+). Its function is as follows. Catalyzes the transfer of the gamma-phospho group of ATP to thymidine to generate dTMP in the salvage pathway of pyrimidine synthesis. The dTMP serves as a substrate for DNA polymerase during viral DNA replication. Allows the virus to be reactivated and to grow in non-proliferative cells lacking a high concentration of phosphorylated nucleic acid precursors. This is Thymidine kinase from Elephas maximus (Indian elephant).